The sequence spans 620 residues: Translocator protein BipB (620 aa).

Residues 58–95 (QCDAQPAAHDARLDDKPALRAPQERDAPPLGASDTGSR) form a disordered region. The segment covering 66 to 84 (HDARLDDKPALRAPQERDA) has biased composition (basic and acidic residues). A coiled-coil region spans residues 309 to 339 (EMQAKREAELQKKSDEYQAQVKKAEEMQKTM). Helical transmembrane passes span 355–375 (FAAA…GLAL), 401–421 (AILK…LVAC), and 430–450 (LAGA…AAFV).

Belongs to the SctE/SipB/YopB family.

It localises to the secreted. The protein resides in the host membrane. Functionally, plays a role in the bacterium-induced formation of multinucleated giant cell (MNGC), which is formed after host cell fusion, as well as in the intercellular spreading of bacteria and in the induction of apoptosis in macrophages. May act in concert with other effector proteins to induce fusion of host cell membranes. This chain is Translocator protein BipB (bipB), found in Burkholderia pseudomallei (strain 1106a).